Here is a 342-residue protein sequence, read N- to C-terminus: S-adenosylmethionine:tRNA ribosyltransferase-isomerase (342 aa).

The protein belongs to the QueA family. In terms of assembly, monomer.

Its subcellular location is the cytoplasm. It catalyses the reaction 7-aminomethyl-7-carbaguanosine(34) in tRNA + S-adenosyl-L-methionine = epoxyqueuosine(34) in tRNA + adenine + L-methionine + 2 H(+). It participates in tRNA modification; tRNA-queuosine biosynthesis. Functionally, transfers and isomerizes the ribose moiety from AdoMet to the 7-aminomethyl group of 7-deazaguanine (preQ1-tRNA) to give epoxyqueuosine (oQ-tRNA). This Bacillus subtilis (strain 168) protein is S-adenosylmethionine:tRNA ribosyltransferase-isomerase.